The chain runs to 134 residues: MIAIERYQLIISKFRMWLFLGCSVEERHFKQPVLISVTFSYNEVPSACLSDKLSDACCYLEVTSLIEEIANTKPYALIEHLANELFDSLVISFGDKASKIDLEVEKERPPVPNLLNPIKFTISKELCPSPVLSA.

Substrate-binding positions include Glu26, Tyr59, and 78-79 (IE). Lys106 acts as the Proton donor/acceptor in catalysis.

The protein belongs to the DHNA family.

The enzyme catalyses 7,8-dihydroneopterin = 6-hydroxymethyl-7,8-dihydropterin + glycolaldehyde. The protein operates within cofactor biosynthesis; tetrahydrofolate biosynthesis; 2-amino-4-hydroxy-6-hydroxymethyl-7,8-dihydropteridine diphosphate from 7,8-dihydroneopterin triphosphate: step 3/4. Catalyzes the conversion of 7,8-dihydroneopterin to 6-hydroxymethyl-7,8-dihydropterin. The polypeptide is Probable dihydroneopterin aldolase (folB) (Chlamydia pneumoniae (Chlamydophila pneumoniae)).